We begin with the raw amino-acid sequence, 156 residues long: ATP synthase subunit b (156 aa).

The chain crosses the membrane as a helical span at residues 12-32 (VAFFIFVLFCMKFVWPPVIAA).

The protein belongs to the ATPase B chain family. F-type ATPases have 2 components, F(1) - the catalytic core - and F(0) - the membrane proton channel. F(1) has five subunits: alpha(3), beta(3), gamma(1), delta(1), epsilon(1). F(0) has three main subunits: a(1), b(2) and c(10-14). The alpha and beta chains form an alternating ring which encloses part of the gamma chain. F(1) is attached to F(0) by a central stalk formed by the gamma and epsilon chains, while a peripheral stalk is formed by the delta and b chains.

The protein localises to the cell inner membrane. Its function is as follows. F(1)F(0) ATP synthase produces ATP from ADP in the presence of a proton or sodium gradient. F-type ATPases consist of two structural domains, F(1) containing the extramembraneous catalytic core and F(0) containing the membrane proton channel, linked together by a central stalk and a peripheral stalk. During catalysis, ATP synthesis in the catalytic domain of F(1) is coupled via a rotary mechanism of the central stalk subunits to proton translocation. Functionally, component of the F(0) channel, it forms part of the peripheral stalk, linking F(1) to F(0). The chain is ATP synthase subunit b from Pseudomonas paraeruginosa (strain DSM 24068 / PA7) (Pseudomonas aeruginosa (strain PA7)).